The chain runs to 348 residues: Organic solute transporter alpha-like protein 3 (348 aa).

Residues 1–49 (MAKEHGAMRSVLNLIGSVMLPQDTSNCSDRHDTPSAPEFLSHLQPFQTV) lie on the Extracellular side of the membrane. Asparagine 26 carries an N-linked (GlcNAc...) asparagine glycan. The helical transmembrane segment at 50–70 (LLSIASFSTTIVLCLSLIHWF) threads the bilayer. The Cytoplasmic segment spans residues 71–84 (YVYKYVSIEKRRNK). The helical transmembrane segment at 85 to 105 (LYWLIAVFPVACSCSFIAMCV) threads the bilayer. The Extracellular segment spans residues 106–109 (PRTA). The helical transmembrane segment at 110–130 (VILTCIGVLYYLMCLFVIVSL) threads the bilayer. At 131-180 (ARHLFGGRESFSTCLQYDDRPIDFRSPPFCCIIPKLPTARSTEKNIRRLE) the chain is on the cytoplasmic side. A helical membrane pass occupies residues 181-201 (WCVLQAPIVRSIIIFLDVVAV). Residues 202-213 (AEMREDATPYIR) are Extracellular-facing. Residues 214 to 234 (YSDMASLCSLLLAIFGVHTLA) traverse the membrane as a helical segment. Topologically, residues 235 to 240 (RVTSNK) are cytoplasmic. Residues 241–261 (LSAYCFMSMFRLVDISLLFFS) traverse the membrane as a helical segment. Residues 262–291 (AQQPMIFQNVLLRFNLISCGPLLNAQENAY) are Extracellular-facing. A helical transmembrane segment spans residues 292–312 (FVCNFIITCEMLLLSVLATWL). Over 313–348 (LAPRHNAMFDAYRPSMALSETTASLNETEQSMILDH) the chain is Cytoplasmic.

It belongs to the OST-alpha family.

It is found in the cell membrane. Its function is as follows. Probable transporter. In Caenorhabditis elegans, this protein is Organic solute transporter alpha-like protein 3 (osta-3).